We begin with the raw amino-acid sequence, 161 residues long: Nucleotide-binding protein BMASAVP1_A0673 (161 aa).

Belongs to the YajQ family.

Nucleotide-binding protein. The polypeptide is Nucleotide-binding protein BMASAVP1_A0673 (Burkholderia mallei (strain SAVP1)).